The chain runs to 260 residues: Rhythmically expressed gene 2 protein (260 aa).

The protein is Rhythmically expressed gene 2 protein (Reg-2) of Drosophila melanogaster (Fruit fly).